Here is a 357-residue protein sequence, read N- to C-terminus: Elongation factor Ts (357 aa).

Residues 82–85 (TDFV) form an involved in Mg(2+) ion dislocation from EF-Tu region.

Belongs to the EF-Ts family.

The protein resides in the cytoplasm. Associates with the EF-Tu.GDP complex and induces the exchange of GDP to GTP. It remains bound to the aminoacyl-tRNA.EF-Tu.GTP complex up to the GTP hydrolysis stage on the ribosome. This chain is Elongation factor Ts, found in Campylobacter jejuni subsp. jejuni serotype O:6 (strain 81116 / NCTC 11828).